Consider the following 127-residue polypeptide: Small ribosomal subunit protein uS12 (127 aa).

The disordered stretch occupies residues 1–28 (MPTIQQLIRDERSKAKRKTKSPALKQCP). At D89 the chain carries 3-methylthioaspartic acid. The interval 104-127 (ATGVKNRQKARSKYGTKRPKPAAK) is disordered. A compositionally biased stretch (basic residues) spans 109–127 (NRQKARSKYGTKRPKPAAK).

The protein belongs to the universal ribosomal protein uS12 family. Part of the 30S ribosomal subunit. Contacts proteins S8 and S17. May interact with IF1 in the 30S initiation complex.

Its function is as follows. With S4 and S5 plays an important role in translational accuracy. Functionally, interacts with and stabilizes bases of the 16S rRNA that are involved in tRNA selection in the A site and with the mRNA backbone. Located at the interface of the 30S and 50S subunits, it traverses the body of the 30S subunit contacting proteins on the other side and probably holding the rRNA structure together. The combined cluster of proteins S8, S12 and S17 appears to hold together the shoulder and platform of the 30S subunit. The polypeptide is Small ribosomal subunit protein uS12 (Microcystis aeruginosa (strain NIES-843 / IAM M-2473)).